The sequence spans 458 residues: Methylenetetrahydrofolate--tRNA-(uracil-5-)-methyltransferase TrmFO (458 aa).

An FAD-binding site is contributed by 11–16; it reads GGGMAG.

This sequence belongs to the MnmG family. TrmFO subfamily. FAD serves as cofactor.

The protein localises to the cytoplasm. The catalysed reaction is uridine(54) in tRNA + (6R)-5,10-methylene-5,6,7,8-tetrahydrofolate + NADH + H(+) = 5-methyluridine(54) in tRNA + (6S)-5,6,7,8-tetrahydrofolate + NAD(+). The enzyme catalyses uridine(54) in tRNA + (6R)-5,10-methylene-5,6,7,8-tetrahydrofolate + NADPH + H(+) = 5-methyluridine(54) in tRNA + (6S)-5,6,7,8-tetrahydrofolate + NADP(+). Functionally, catalyzes the folate-dependent formation of 5-methyl-uridine at position 54 (M-5-U54) in all tRNAs. This chain is Methylenetetrahydrofolate--tRNA-(uracil-5-)-methyltransferase TrmFO, found in Jannaschia sp. (strain CCS1).